A 310-amino-acid chain; its full sequence is Olfactory receptor 2A7 (310 aa).

The Extracellular segment spans residues 1 to 24 (MGDNITSITEFLLLGFPVGPRIQM). N-linked (GlcNAc...) asparagine glycosylation is present at Asn-4. Residues 25–48 (LLFGLFSLFYVFTLLGNGTILGLI) form a helical membrane-spanning segment. Residues 49–56 (SLDSRLHA) are Cytoplasmic-facing. A helical membrane pass occupies residues 57-78 (PMYFFLSHLAVVDIAYACNTVP). Topologically, residues 79–99 (RMLVNLLHPAKPISFAGRMMQ) are extracellular. The helical transmembrane segment at 100–119 (TFLFSTFAVTECLLLVVMSY) threads the bilayer. Residues 120 to 138 (DLYVAICHPLRYLAIMTWR) lie on the Cytoplasmic side of the membrane. A helical membrane pass occupies residues 139–157 (VCITLAVTSWTTGVLLSLI). The Extracellular portion of the chain corresponds to 158–194 (HLVLLLPLPFCRPQKIYHFFCEILAVLKLACADTHIN). The helical transmembrane segment at 195–218 (ENMVLAGAISGLVGPLSTIVVSYM) threads the bilayer. Topologically, residues 219–235 (CILCAILQIQSREVQRK) are cytoplasmic. Residues 236-258 (AFCTCFSHLCVIGLFYGTAIIMY) traverse the membrane as a helical segment. The Extracellular segment spans residues 259–271 (VGPRYGNPKEQKK). A helical membrane pass occupies residues 272–291 (YLLLFHSLFNPMLNPLICSL). The Cytoplasmic segment spans residues 292-310 (RNSEVKNTLKRVLGVERAL).

The protein belongs to the G-protein coupled receptor 1 family.

The protein localises to the cell membrane. In terms of biological role, odorant receptor. This Homo sapiens (Human) protein is Olfactory receptor 2A7 (OR2A7).